The following is a 524-amino-acid chain: Magnesium/proton exchanger 2 (524 aa).

Helical transmembrane passes span 28-48, 88-108, 125-145, 157-177, 185-205, 325-345, 349-369, 377-397, 430-450, 462-482, and 496-516; these read GVRA…LSAI, IADV…LATI, GTLV…CVVM, LGVW…LYII, VITL…LLHA, VIGI…AFIP, IAHG…IAYG, ISCV…AAGT, IYVG…LFVY, LSFS…VLVL, and MWAW…VVLS.

The protein belongs to the Ca(2+):cation antiporter (CaCA) (TC 2.A.19) family. MHX subfamily.

Its subcellular location is the vacuole membrane. Its function is as follows. Vacuolar transporter that exchanges protons with Mg(2+), Zn(2+) and Fe(2+) ions. May control the partitioning of Mg(2+) and Zn(2+) between plant organs. In Oryza sativa subsp. japonica (Rice), this protein is Magnesium/proton exchanger 2 (MHX2).